The sequence spans 714 residues: P-loop NTPase domain-containing protein LPA1 (714 aa).

The segment covering 1 to 11 has biased composition (low complexity); sequence MPMPPQCASSK. Disordered stretches follow at residues 1 to 42, 259 to 293, and 595 to 689; these read MPMP…PPPK, QKLD…PRTE, and FGSE…GSGN. The segment covering 271 to 285 has biased composition (basic and acidic residues); that stretch reads EGRDDTSDDKAHHGS. Over residues 595-617 the composition is skewed to acidic residues; sequence FGSEEDADDPPDAGTDEDLTDEE. A compositionally biased stretch (basic and acidic residues) spans 618–636; the sequence is RDMHEIEAGSVDEHSTKSD. The segment covering 659–670 has biased composition (polar residues); it reads AASSTKNSSNQE.

Expressed in roots, leaf blade shoots, leaf sheath shoots and panicles.

In terms of biological role, required for the accumulation of phytic acid in seeds. Phytic acid is the primary storage form of phosphorus in cereal grains and other plant seeds. This Oryza sativa subsp. japonica (Rice) protein is P-loop NTPase domain-containing protein LPA1.